A 192-amino-acid polypeptide reads, in one-letter code: MPKGCLVITVSGLAGSGTTTLCRKLAEHYGFKHVYAGLIFRQMAKERGMTLEEFQKYAELHPEIDREVDRRQIEAAKECNVVIEGRLAGWMVKNADLKIWLDAPIRVRAERVARREGITVEEAFMKIAEREMQNRKRYLNLYGIDINDLSIYDLIIDTSKWSPDGVFAIVKAAIDHLDPVGDAGSKKEKEVG.

Residue 12 to 20 (GLAGSGTTT) participates in ATP binding.

It belongs to the cytidylate kinase family. Type 2 subfamily.

Its subcellular location is the cytoplasm. It carries out the reaction CMP + ATP = CDP + ADP. It catalyses the reaction dCMP + ATP = dCDP + ADP. This chain is Cytidylate kinase, found in Pyrococcus furiosus (strain ATCC 43587 / DSM 3638 / JCM 8422 / Vc1).